A 44-amino-acid chain; its full sequence is Poly-ADP-ribosylation-amplifying and CtIP-maintaining micropeptide (44 aa).

Residues 1 to 44 (MAASGGTKKAQSGGRRLREPSSRPSRRARQRPRRGALRKAGRFL) are disordered. Basic residues predominate over residues 24-44 (PSRRARQRPRRGALRKAGRFL).

As to quaternary structure, interacts with KLHL15; preventing ubiquitination and degradation of RBBP8/CtIP. Interacts with PARP1.

Its subcellular location is the nucleus. It is found in the nucleolus. The protein resides in the chromosome. Micropeptide that acts as a regulator of DNA repair both by preventing KLHL15-mediated ubiquitination and degradation of RBBP8/CtIP, and by promoting the poly-ADP-ribosyltransferase activity of PARP1. Prevents KLHL15-mediated ubiquitination of RBBP8/CtIP by competitively blocking the association between KLHL15 and RBBP8/CtIP. Recruited to DNA damage sites via association with poly-ADP-ribose chains, and enhances the poly-ADP-ribosyltransferase activity of PARP1. The protein is Poly-ADP-ribosylation-amplifying and CtIP-maintaining micropeptide of Homo sapiens (Human).